The sequence spans 336 residues: tRNA-dihydrouridine(20/20a) synthase (336 aa).

FMN-binding positions include 24-26 and glutamine 77; that span reads PMM. The Proton donor role is filled by cysteine 107. FMN is bound by residues lysine 146, histidine 178, 218–220, and 240–241; these read NGG and GR.

The protein belongs to the Dus family. DusA subfamily. FMN serves as cofactor.

It catalyses the reaction 5,6-dihydrouridine(20) in tRNA + NADP(+) = uridine(20) in tRNA + NADPH + H(+). The enzyme catalyses 5,6-dihydrouridine(20) in tRNA + NAD(+) = uridine(20) in tRNA + NADH + H(+). The catalysed reaction is 5,6-dihydrouridine(20a) in tRNA + NADP(+) = uridine(20a) in tRNA + NADPH + H(+). It carries out the reaction 5,6-dihydrouridine(20a) in tRNA + NAD(+) = uridine(20a) in tRNA + NADH + H(+). Its function is as follows. Catalyzes the synthesis of 5,6-dihydrouridine (D), a modified base found in the D-loop of most tRNAs, via the reduction of the C5-C6 double bond in target uridines. Specifically modifies U20 and U20a in tRNAs. The polypeptide is tRNA-dihydrouridine(20/20a) synthase (Pseudomonas putida (strain ATCC 47054 / DSM 6125 / CFBP 8728 / NCIMB 11950 / KT2440)).